The sequence spans 360 residues: Phosphoserine aminotransferase (360 aa).

Position 41 (Arg41) interacts with L-glutamate. Positions 101, 152, 172, and 195 each coordinate pyridoxal 5'-phosphate. Lys196 bears the N6-(pyridoxal phosphate)lysine mark. Asn237–Thr238 serves as a coordination point for pyridoxal 5'-phosphate.

It belongs to the class-V pyridoxal-phosphate-dependent aminotransferase family. SerC subfamily. Homodimer. Pyridoxal 5'-phosphate is required as a cofactor.

It localises to the cytoplasm. The enzyme catalyses O-phospho-L-serine + 2-oxoglutarate = 3-phosphooxypyruvate + L-glutamate. It catalyses the reaction 4-(phosphooxy)-L-threonine + 2-oxoglutarate = (R)-3-hydroxy-2-oxo-4-phosphooxybutanoate + L-glutamate. The protein operates within amino-acid biosynthesis; L-serine biosynthesis; L-serine from 3-phospho-D-glycerate: step 2/3. It functions in the pathway cofactor biosynthesis; pyridoxine 5'-phosphate biosynthesis; pyridoxine 5'-phosphate from D-erythrose 4-phosphate: step 3/5. In terms of biological role, catalyzes the reversible conversion of 3-phosphohydroxypyruvate to phosphoserine and of 3-hydroxy-2-oxo-4-phosphonooxybutanoate to phosphohydroxythreonine. The protein is Phosphoserine aminotransferase of Burkholderia cenocepacia (strain HI2424).